We begin with the raw amino-acid sequence, 377 residues long: Protein-glutamate methylesterase/protein-glutamine glutaminase 1 (377 aa).

In terms of domain architecture, Response regulatory spans lysine 4–leucine 121. Aspartate 55 carries the post-translational modification 4-aspartylphosphate. Positions arginine 138–arginine 170 are disordered. The segment covering proline 146 to serine 157 has biased composition (low complexity). One can recognise a CheB-type methylesterase domain in the interval serine 184 to alanine 377. Residues serine 196, histidine 223, and aspartate 319 contribute to the active site.

Belongs to the CheB family. Phosphorylated by CheA. Phosphorylation of the N-terminal regulatory domain activates the methylesterase activity.

It localises to the cytoplasm. The catalysed reaction is [protein]-L-glutamate 5-O-methyl ester + H2O = L-glutamyl-[protein] + methanol + H(+). It carries out the reaction L-glutaminyl-[protein] + H2O = L-glutamyl-[protein] + NH4(+). Its function is as follows. Involved in chemotaxis. Part of a chemotaxis signal transduction system that modulates chemotaxis in response to various stimuli. Catalyzes the demethylation of specific methylglutamate residues introduced into the chemoreceptors (methyl-accepting chemotaxis proteins or MCP) by CheR. Also mediates the irreversible deamidation of specific glutamine residues to glutamic acid. This Vibrio cholerae serotype O1 (strain ATCC 39315 / El Tor Inaba N16961) protein is Protein-glutamate methylesterase/protein-glutamine glutaminase 1.